The primary structure comprises 163 residues: Putative pre-16S rRNA nuclease (163 aa).

Belongs to the YqgF nuclease family.

It is found in the cytoplasm. Its function is as follows. Could be a nuclease involved in processing of the 5'-end of pre-16S rRNA. In Rhodopseudomonas palustris (strain BisB18), this protein is Putative pre-16S rRNA nuclease.